A 144-amino-acid polypeptide reads, in one-letter code: Large ribosomal subunit protein uL24 (144 aa).

Residues 102–144 (NIVVEKPEPEPEPRKEETAEAQEAKEEAVAEEKTEVDDNDKQN) form a disordered region. A compositionally biased stretch (basic and acidic residues) spans 103–134 (IVVEKPEPEPEPRKEETAEAQEAKEEAVAEEK). Acidic residues predominate over residues 135–144 (TEVDDNDKQN).

The protein belongs to the universal ribosomal protein uL24 family. Part of the 50S ribosomal subunit.

In terms of biological role, one of two assembly initiator proteins, it binds directly to the 5'-end of the 23S rRNA, where it nucleates assembly of the 50S subunit. Functionally, located at the polypeptide exit tunnel on the outside of the subunit. The chain is Large ribosomal subunit protein uL24 (rpl24) from Thermoplasma acidophilum (strain ATCC 25905 / DSM 1728 / JCM 9062 / NBRC 15155 / AMRC-C165).